Consider the following 542-residue polypeptide: CTP synthase (542 aa).

Positions Met1–Leu265 are amidoligase domain. Position 13 (Ser13) interacts with CTP. A UTP-binding site is contributed by Ser13. Residues Ser14 to Ile19 and Asp71 contribute to the ATP site. Residues Asp71 and Glu139 each contribute to the Mg(2+) site. CTP-binding positions include Asp146–Glu148, Lys186–Gln191, and Lys222. Residues Lys186 to Gln191 and Lys222 each bind UTP. The Glutamine amidotransferase type-1 domain occupies Thr290–Lys541. Gly351 contributes to the L-glutamine binding site. The active-site Nucleophile; for glutamine hydrolysis is the Cys378. L-glutamine contacts are provided by residues Leu379 to Gln382, Glu402, and Arg469. Active-site residues include His514 and Glu516.

The protein belongs to the CTP synthase family. As to quaternary structure, homotetramer.

The enzyme catalyses UTP + L-glutamine + ATP + H2O = CTP + L-glutamate + ADP + phosphate + 2 H(+). The catalysed reaction is L-glutamine + H2O = L-glutamate + NH4(+). It catalyses the reaction UTP + NH4(+) + ATP = CTP + ADP + phosphate + 2 H(+). It participates in pyrimidine metabolism; CTP biosynthesis via de novo pathway; CTP from UDP: step 2/2. Its activity is regulated as follows. Allosterically activated by GTP, when glutamine is the substrate; GTP has no effect on the reaction when ammonia is the substrate. The allosteric effector GTP functions by stabilizing the protein conformation that binds the tetrahedral intermediate(s) formed during glutamine hydrolysis. Inhibited by the product CTP, via allosteric rather than competitive inhibition. Catalyzes the ATP-dependent amination of UTP to CTP with either L-glutamine or ammonia as the source of nitrogen. Regulates intracellular CTP levels through interactions with the four ribonucleotide triphosphates. The chain is CTP synthase from Pseudomonas putida (strain W619).